Consider the following 177-residue polypeptide: Nicotinamide-nucleotide adenylyltransferase (177 aa).

It belongs to the archaeal NMN adenylyltransferase family.

Its subcellular location is the cytoplasm. The enzyme catalyses beta-nicotinamide D-ribonucleotide + ATP + H(+) = diphosphate + NAD(+). It functions in the pathway cofactor biosynthesis; NAD(+) biosynthesis; NAD(+) from nicotinamide D-ribonucleotide: step 1/1. In Halobacterium salinarum (strain ATCC 29341 / DSM 671 / R1), this protein is Nicotinamide-nucleotide adenylyltransferase.